Here is a 414-residue protein sequence, read N- to C-terminus: Serpin A3-6 (414 aa).

Positions 1–25 are cleaved as a signal peptide; the sequence is MRTERVSPLLALGILVAGLCSRVHC. N-linked (GlcNAc...) asparagine glycosylation is found at Asn103, Asn183, Asn233, Asn267, and Asn321.

Belongs to the serpin family. As to quaternary structure, homodimer.

It localises to the cytoplasmic vesicle. Its subcellular location is the secretory vesicle. It is found in the chromaffin granule. The protein localises to the secreted. Functionally, serine protease inhibitor. The sequence is that of Serpin A3-6 from Bos taurus (Bovine).